The primary structure comprises 555 residues: CTP synthase (555 aa).

The segment at 1 to 271 is amidoligase domain; that stretch reads MVKRGKKTKY…DDKLAELFNI (271 aa). Residue serine 19 coordinates CTP. Serine 19 is a binding site for UTP. Residues 20 to 25 and aspartate 77 contribute to the ATP site; that span reads SLGKGL. The Mg(2+) site is built by aspartate 77 and glutamate 145. Residues 152-154, 192-197, and lysine 228 contribute to the CTP site; these read DIE and KTKPTQ. UTP contacts are provided by residues 192–197 and lysine 228; that span reads KTKPTQ. Residues 297–537 enclose the Glutamine amidotransferase type-1 domain; the sequence is RIGIVGKYVE…VKAALEHRDA (241 aa). Residue glycine 358 coordinates L-glutamine. Cysteine 385 serves as the catalytic Nucleophile; for glutamine hydrolysis. Residues 386 to 389, glutamate 409, and arginine 466 each bind L-glutamine; that span reads LGLQ. Active-site residues include histidine 510 and glutamate 512. The segment at 536-555 is disordered; the sequence is DAQQRQPSAEVKKLPVGKNG.

Belongs to the CTP synthase family. In terms of assembly, homotetramer.

It carries out the reaction UTP + L-glutamine + ATP + H2O = CTP + L-glutamate + ADP + phosphate + 2 H(+). The catalysed reaction is L-glutamine + H2O = L-glutamate + NH4(+). It catalyses the reaction UTP + NH4(+) + ATP = CTP + ADP + phosphate + 2 H(+). Its pathway is pyrimidine metabolism; CTP biosynthesis via de novo pathway; CTP from UDP: step 2/2. With respect to regulation, allosterically activated by GTP, when glutamine is the substrate; GTP has no effect on the reaction when ammonia is the substrate. The allosteric effector GTP functions by stabilizing the protein conformation that binds the tetrahedral intermediate(s) formed during glutamine hydrolysis. Inhibited by the product CTP, via allosteric rather than competitive inhibition. Catalyzes the ATP-dependent amination of UTP to CTP with either L-glutamine or ammonia as the source of nitrogen. Regulates intracellular CTP levels through interactions with the four ribonucleotide triphosphates. In Anaeromyxobacter dehalogenans (strain 2CP-C), this protein is CTP synthase.